The sequence spans 320 residues: Cytochrome f (320 aa).

A signal peptide spans 1-35; sequence MQTRNTFSWIREEITRSISVSLMIYIITWASISSA. The heme site is built by tyrosine 36, cysteine 56, cysteine 59, and histidine 60. The chain crosses the membrane as a helical span at residues 286–306; sequence VQGLLFFLGSVVLAQIFLVLK.

It belongs to the cytochrome f family. The 4 large subunits of the cytochrome b6-f complex are cytochrome b6, subunit IV (17 kDa polypeptide, petD), cytochrome f and the Rieske protein, while the 4 small subunits are PetG, PetL, PetM and PetN. The complex functions as a dimer. Heme serves as cofactor.

It is found in the plastid. Its subcellular location is the chloroplast thylakoid membrane. Its function is as follows. Component of the cytochrome b6-f complex, which mediates electron transfer between photosystem II (PSII) and photosystem I (PSI), cyclic electron flow around PSI, and state transitions. This Crucihimalaya wallichii (Rock-cress) protein is Cytochrome f.